The following is a 450-amino-acid chain: Flavin-containing monooxygenase FMO GS-OX-like 3 (450 aa).

17 to 22 is a binding site for FAD; it reads GAGPAG. 215-220 is an NADP(+) binding site; the sequence is GNSSSA.

This sequence belongs to the FMO family. FAD is required as a cofactor.

Catalyzes the conversion of methylthioalkyl glucosinolates of any chain length into methylsulfinylalkyl glucosinolates. The polypeptide is Flavin-containing monooxygenase FMO GS-OX-like 3 (Arabidopsis thaliana (Mouse-ear cress)).